We begin with the raw amino-acid sequence, 60 residues long: Large ribosomal subunit protein uL30 (60 aa).

This sequence belongs to the universal ribosomal protein uL30 family. As to quaternary structure, part of the 50S ribosomal subunit.

In Burkholderia mallei (strain NCTC 10247), this protein is Large ribosomal subunit protein uL30.